The following is a 491-amino-acid chain: uncharacterized protein (491 aa).

Transmembrane regions (helical) follow at residues 48–68 (LILVSAFALLGPMASSMVAPC), 85–105 (ALILSIYLLVFAISPMISAPL), 112–132 (RMLLQVGNVIFIVFNMACGLA), 140–160 (IFRFLAGFGSATPMGLGSGTI), 174–194 (AVMSLAPLLGPTIGPVVSGFI), 202–222 (WIFWSTTIFSGFIFALSLPLL), 277–297 (PIVILCSTYMAIQYGILYLVL), 317–337 (LNYIASGIGLIFGSQASGIFI), 358–378 (VPVILLGTFFFPAGLFIYGWT), 383–403 (THWIGPDIGAAMFNIGLMLGW), 408–428 (TYLIDSFMIYAASSTAVACCV), and 455–475 (LLAFIVLGSSIITCSLLWFGG).

This sequence belongs to the major facilitator superfamily.

The protein resides in the membrane. This is an uncharacterized protein from Schizosaccharomyces pombe (strain 972 / ATCC 24843) (Fission yeast).